The primary structure comprises 355 residues: MAFLCPVRMRRDKKKATNASIERDLPAVGVLGMGRITGSSSIETLVRVGIEKEHGLSPDSKMVVLHDFTPCVDDELEVKRGQLVNILYRENDWVYVIGQDSRQEGFIPFSYCAPCNTQLADLAVKKKLPREQCPEQPIEENIPLLGTDNKLDVLCDETLNPGSANSIENTLLVEPECTPFVKEPSGRCIVLYTFIARDENDLSVERGEFVTVLNREDPDWFWIMRSDGQEGFVPASFIYPADSVRVLQQQKATLNAMETILQQGQQGQQSQQQQQPQLGLGTDDLRYHGTELVMLYDYKAQAPDDLYLSVRRGDWIYADLTNQTVDGWLWAYAPKTRKYGFIPKAYARPPAMTSL.

SH3 domains follow at residues 57–117 (SPDS…PCNT), 183–243 (EPSG…PADS), and 287–352 (YHGT…PPAM).

As to quaternary structure, interacts with dachs (via C-terminus); the interaction is direct. Interacts (via N-terminus including SH3 domain 1) with palmitoyltransferase app; this leads to palmitoylation of Dlish by app. Also interacts with dco, ft, ft-regulated E3 ubiquitin ligase Fbxl7, F-box protein slmb and SCF E3 ubiquitin-protein ligase complex component Cul1. In terms of processing, palmitoylated by app.

The protein resides in the cytoplasm. Its subcellular location is the cell cortex. Required for the apical cell cortex localization, total cellular level and full activity of dachs. In Drosophila melanogaster (Fruit fly), this protein is SH3 domain-containing protein Dlish.